We begin with the raw amino-acid sequence, 127 residues long: MLKSLLAIGLGAMVGAWLRWGLGMKLNALFPAVPPGTLLANLIGGYIIGLAIAFFSASPSLSPEWRLLLITGFCGGLTTFSTFSAEVVSLIQEGRILWALGSIALHVSGSLLMTAAGLATFYFISGR.

4 helical membrane-spanning segments follow: residues 4 to 24, 35 to 55, 68 to 88, and 96 to 116; these read SLLA…GLGM, PGTL…IAFF, LLIT…AEVV, and ILWA…MTAA. Gly-75 and Thr-78 together coordinate Na(+).

This sequence belongs to the fluoride channel Fluc/FEX (TC 1.A.43) family.

The protein resides in the cell inner membrane. It carries out the reaction fluoride(in) = fluoride(out). Na(+) is not transported, but it plays an essential structural role and its presence is essential for fluoride channel function. Its function is as follows. Fluoride-specific ion channel. Important for reducing fluoride concentration in the cell, thus reducing its toxicity. The protein is Fluoride-specific ion channel FluC of Pseudomonas putida (strain W619).